The following is a 361-amino-acid chain: MEQKQHILKQSTFSSSPSSYSSISDRPISLLSRNGLLLLLLALVLLLGVLLPWPGSPLFLFPNRLSSSLSPSPQSKWRDYTLAQAARFVAKNGTVIVCAVSSPFLPFLNNWLISVSRQKHQDKVLVIAEDYITLYKVNEKWPGHAVLIPPALDSKTAFSFGSQGFFNFTARRPQHLLQILELGYNVMYNDVDMVWLQDPFLYLEGSHDAYFTDDMPQIKPLNHSHDLPHPDRNGETYICSCMIYLRPTNGAKLLMKKWSEELQSQAWSESIRFKANDQPAFNLALNKTAHQVDLYLLSQVAFPTGGLYFKNEAWVQETKGKHVIVHNNYIIGYDRKMKRFQDYGLWLVDDHALESPLGKLE.

Residues 1-21 (MEQKQHILKQSTFSSSPSSYS) form a disordered region. The Cytoplasmic portion of the chain corresponds to 1–34 (MEQKQHILKQSTFSSSPSSYSSISDRPISLLSRN). Over residues 11–21 (STFSSSPSSYS) the composition is skewed to low complexity. Residues 35-55 (GLLLLLLALVLLLGVLLPWPG) traverse the membrane as a helical; Signal-anchor for type II membrane protein segment. At 56–361 (SPLFLFPNRL…ALESPLGKLE (306 aa)) the chain is on the lumenal side. N92 and N167 each carry an N-linked (GlcNAc...) asparagine glycan. The DXD motif motif lies at 190 to 192 (DVD). N-linked (GlcNAc...) asparagine glycans are attached at residues N222 and N286.

It belongs to the glycosyltransferase 77 family. It depends on Mn(2+) as a cofactor. Requires Mg(2+) as cofactor. In terms of processing, glycosylated. Expressed in roots, rosette leaves, cauline leaves and stems.

It localises to the golgi apparatus membrane. Its function is as follows. Catalyzes the transfer of D-xylose from UDP-alpha-D-xylose onto L-fucose. Probably involved in the biosynthesis of rhamnogalacturonan II (RG-II) through xylosylation of the internal fucose moiety of the A-chain of RG-II, a structurally complex pectic polysaccharide of the primary cell wall. RG-II is essential for the cell wall integrity of rapidly growing tissues such as roots and pollen tube growth and elongation. The polypeptide is UDP-D-xylose:L-fucose alpha-1,3-D-xylosyltransferase 1 (Arabidopsis thaliana (Mouse-ear cress)).